The chain runs to 488 residues: UDP-N-acetylmuramate--L-alanine ligase (488 aa).

127–133 is an ATP binding site; that stretch reads GTHGKTT.

The protein belongs to the MurCDEF family.

It localises to the cytoplasm. It carries out the reaction UDP-N-acetyl-alpha-D-muramate + L-alanine + ATP = UDP-N-acetyl-alpha-D-muramoyl-L-alanine + ADP + phosphate + H(+). Its pathway is cell wall biogenesis; peptidoglycan biosynthesis. In terms of biological role, cell wall formation. The protein is UDP-N-acetylmuramate--L-alanine ligase of Shewanella sp. (strain MR-4).